A 499-amino-acid chain; its full sequence is Maturase K (499 aa).

It belongs to the intron maturase 2 family. MatK subfamily.

Its subcellular location is the plastid. The protein resides in the chloroplast. In terms of biological role, usually encoded in the trnK tRNA gene intron. Probably assists in splicing its own and other chloroplast group II introns. The chain is Maturase K from Camellia sinensis (Tea plant).